The chain runs to 1255 residues: Stress response protein NST1 (1255 aa).

Residues 1 to 19 (MKGNRNPPPPPSGPVPPSP) are compositionally biased toward pro residues. Disordered regions lie at residues 1–214 (MKGN…SQEE), 285–379 (NHPN…SEEL), 470–525 (RAYD…RMEE), 563–898 (EAEN…PPMG), and 956–1080 (HPPP…PPFG). Residues 50 to 61 (PSPTASSLAAKP) are compositionally biased toward low complexity. The span at 76–86 (NRKKQKRRAKA) shows a compositional bias: basic residues. Low complexity predominate over residues 87–96 (AAKAAAERAQ). Over residues 118–127 (ADPEDDEDEP) the composition is skewed to acidic residues. Basic residues predominate over residues 151 to 162 (KSKKSKKKKKKN). Residues 187–196 (PILPPPPPQQ) show a composition bias toward pro residues. The segment covering 201–214 (MSREKIWNTNSQEE) has biased composition (basic and acidic residues). Acidic residues predominate over residues 330–376 (ELEGDEEEEEVEAEAEDDGEGDEEGEDVYSEDELEDDMYSEEEQEPS). A compositionally biased stretch (basic and acidic residues) spans 470–481 (RAYDHPNGERYV). Positions 488–518 (PDEEEFEDEEEEYEEDDEEEYNSPDEEDTMT) are enriched in acidic residues. Residues 547–745 (REKVAKERQA…ERRKKEERAA (199 aa)) are a coiled coil. 2 stretches are compositionally biased toward basic and acidic residues: residues 590–630 (KKEA…AEEK) and 637–745 (QRKA…ERAA). Positions 770–780 (PPAPPVAPVPV) are enriched in pro residues. A compositionally biased stretch (low complexity) spans 811–835 (QTSQQDGSTASSGAASNSGSMASQN). Composition is skewed to polar residues over residues 865 to 877 (QGSA…SASP) and 983 to 1004 (RDNQ…QPIS). The span at 1067 to 1080 (GPRPAPGFPMPPFG) shows a compositional bias: pro residues.

It belongs to the NST1 family.

It localises to the cytoplasm. Functionally, may act as a negative regulator of salt tolerance. The polypeptide is Stress response protein NST1 (NST1) (Chaetomium globosum (strain ATCC 6205 / CBS 148.51 / DSM 1962 / NBRC 6347 / NRRL 1970) (Soil fungus)).